The chain runs to 453 residues: Wall-associated protein (453 aa).

A signal peptide spans Met1–Ala29. A disordered region spans residues Gly331–Thr403. The segment covering Glu342–Thr403 has biased composition (low complexity). Positions Leu422 to Gly426 match the LPXTG sorting signal motif. Residue Thr425 is modified to Pentaglycyl murein peptidoglycan amidated threonine. A propeptide spans Gly426–Arg453 (removed by sortase).

The protein localises to the secreted. Its subcellular location is the cell wall. The sequence is that of Wall-associated protein (wapA) from Streptococcus mutans serotype c (strain ATCC 700610 / UA159).